Reading from the N-terminus, the 505-residue chain is tRNA-2-methylthio-N(6)-dimethylallyladenosine synthase (505 aa).

The MTTase N-terminal domain maps to 10–126 (RSYEVRTYGC…LPALLDRARH (117 aa)). Cysteine 19, cysteine 55, cysteine 89, cysteine 163, cysteine 167, and cysteine 170 together coordinate [4Fe-4S] cluster. The region spanning 149-385 (RESAYAGWVS…IALQEQITLE (237 aa)) is the Radical SAM core domain. The TRAM domain maps to 388–459 (QKLVGAEVEL…PHHLVADTPV (72 aa)).

Belongs to the methylthiotransferase family. MiaB subfamily. In terms of assembly, monomer. It depends on [4Fe-4S] cluster as a cofactor.

Its subcellular location is the cytoplasm. The catalysed reaction is N(6)-dimethylallyladenosine(37) in tRNA + (sulfur carrier)-SH + AH2 + 2 S-adenosyl-L-methionine = 2-methylsulfanyl-N(6)-dimethylallyladenosine(37) in tRNA + (sulfur carrier)-H + 5'-deoxyadenosine + L-methionine + A + S-adenosyl-L-homocysteine + 2 H(+). Its function is as follows. Catalyzes the methylthiolation of N6-(dimethylallyl)adenosine (i(6)A), leading to the formation of 2-methylthio-N6-(dimethylallyl)adenosine (ms(2)i(6)A) at position 37 in tRNAs that read codons beginning with uridine. The polypeptide is tRNA-2-methylthio-N(6)-dimethylallyladenosine synthase (Rhodococcus jostii (strain RHA1)).